Consider the following 472-residue polypeptide: Tubulin gamma chain (472 aa).

142–148 (AGGTGSG) lines the GTP pocket.

This sequence belongs to the tubulin family. Component of the gamma-tubulin small complex (gamma-TuSC) composed of tubulin gamma chain, gamma-tubulin complex protein 2 (GCP2) and gamma-tubulin complex protein 3 (GCP3). Interacts with GCP2 and GCP3. Interacts with EB1.

The protein localises to the cytoplasm. Its subcellular location is the cytoskeleton. It is found in the flagellum axoneme. It localises to the flagellum basal body. The protein resides in the spindle. The protein localises to the microtubule organizing center. Tubulin is the major constituent of microtubules (Potential). The gamma chain is found at microtubule organizing centers (MTOC) such as the centrosome. Component of the gamma-tubulin small complex (gamma-TuSC) involved in microtubule nucleation for the formation of median bodies and in the biogenesis of flagella. Gamma-TuSC may be required for the correct positioning of EB1 within the trophozoites. The polypeptide is Tubulin gamma chain (Giardia intestinalis (strain ATCC 50803 / WB clone C6) (Giardia lamblia)).